The sequence spans 533 residues: Large neutral amino acids transporter small subunit 2 (533 aa).

Residues 1–33 (MEKGTRQRNNTAKNHPDRGSDTSPEAEASSGGG) form a disordered region. Residues 1–45 (MEKGTRQRNNTAKNHPDRGSDTSPEAEASSGGGGVALKKEIGLVS) lie on the Cytoplasmic side of the membrane. 4 positions are modified to phosphoserine: serine 20, serine 23, serine 29, and serine 30. Residues 46 to 66 (ACGIIVGNIIGSGIFVSPKGV) form a helical membrane-spanning segment. Isoleucine 54 serves as a coordination point for L-leucine. The Extracellular segment spans residues 67 to 74 (LENAGSVG). A helical membrane pass occupies residues 75–96 (LALIVWIVTGVITAVGALCYAE). Topologically, residues 97–117 (LGVTIPKSGGDYSYVKDIFGG) are cytoplasmic. A helical transmembrane segment spans residues 118–150 (LAGFLRLWIAVLVIYPTNQAVIALTFSNYVLQP). Asparagine 135 is an L-tryptophan binding site. The Extracellular portion of the chain corresponds to 151–158 (LFPTCFPP). The chain crosses the membrane as a helical span at residues 159-179 (ESGLRLLAAICLLLLTWVNCS). Over 180–182 (SVR) the chain is Cytoplasmic. A helical membrane pass occupies residues 183 to 211 (WATRVQDIFTAGKLLALALIIIMGVVQIC). Residues 212 to 231 (KGEFFWLEPKNAFENFQEPD) are Extracellular-facing. Residues 232–253 (IGLVALAFLQGSFAYGGWNFLN) traverse the membrane as a helical segment. Glycine 247 lines the L-leucine pocket. The Cytoplasmic segment spans residues 254-266 (YVTEELVDPYKNL). Residues 267–288 (PRAIFISIPLVTFVYVFANIAY) form a helical membrane-spanning segment. At 289–313 (VTAMSPQELLASNAVAVTFGEKLLG) the chain is on the extracellular side. The helical transmembrane segment at 314–339 (VMAWIMPISVALSTFGGVNGSLFTSS) threads the bilayer. The Cytoplasmic segment spans residues 340-365 (RLFFAGAREGHLPSVLAMIHVKRCTP). The helical transmembrane segment at 366 to 383 (IPALLFTCLSTLLMLVTS) threads the bilayer. Topologically, residues 384–387 (DMYT) are extracellular. The chain crosses the membrane as a helical span at residues 388–409 (LINYVGFINYLFYGVTVAGQIV). Position 396 (asparagine 396) interacts with L-tryptophan. Residues 410-424 (LRWKKPDIPRPIKIS) lie on the Cytoplasmic side of the membrane. 2 helical membrane passes run 425 to 447 (LLFP…WSEP) and 448 to 467 (VVCG…YFLG). Topologically, residues 468-533 (VYWQHKPKCF…VKDPDSEEQP (66 aa)) are cytoplasmic. The disordered stretch occupies residues 500–533 (GDSGTEETIDDVEEQHKPIFQPTPVKDPDSEEQP). Residues 502–512 (SGTEETIDDVE) are compositionally biased toward acidic residues. Serine 529 is modified (phosphoserine).

It belongs to the amino acid-polyamine-organocation (APC) superfamily. L-type amino acid transporter (LAT) (TC 2.A.3.8) family. Disulfide-linked heterodimer composed of the catalytic light chain subunit SLC7A8 and the heavy chain subunit SLC3A2. SLC3A2 acts as a chaperone for correct plasma membrane trafficking and stabilization of SLC7A8 and modulates the substrate affinity and specificity of SLC7A8. ICAM-1 associates with the heterodimer SLC3A2/SLC7A8; facilitates leucine uptake. In terms of tissue distribution, expression is seen in jejunum mucosa and the epithelial cells of the jejunum, ileum and colon, as well as in kidney, placenta, brain, testis and skeletal muscle. Expressed in retina, inner blood-retinal barrier of retina, retinal vascular endothelial cells. Also expressed in the intestinal epithelial cell line IEC-6 and in the retinal capillary endothelial cell line TR-iBRB2.

The protein resides in the cell membrane. It localises to the basolateral cell membrane. It carries out the reaction L-dopa(out) + L-phenylalanine(in) = L-dopa(in) + L-phenylalanine(out). It catalyses the reaction 3,3'-diiodo-L-thyronine(out) = 3,3'-diiodo-L-thyronine(in). The enzyme catalyses L-histidine(in) + L-phenylalanine(out) = L-histidine(out) + L-phenylalanine(in). The catalysed reaction is L-tryptophan(in) + L-phenylalanine(out) = L-tryptophan(out) + L-phenylalanine(in). It carries out the reaction L-isoleucine(in) + L-phenylalanine(out) = L-isoleucine(out) + L-phenylalanine(in). It catalyses the reaction L-valine(in) + L-phenylalanine(out) = L-valine(out) + L-phenylalanine(in). The enzyme catalyses L-leucine(in) + L-phenylalanine(out) = L-leucine(out) + L-phenylalanine(in). The catalysed reaction is L-glutamine(in) + L-phenylalanine(out) = L-glutamine(out) + L-phenylalanine(in). It carries out the reaction L-cysteine(in) + L-phenylalanine(out) = L-cysteine(out) + L-phenylalanine(in). It catalyses the reaction L-phenylalanine(out) + L-methionine(in) = L-phenylalanine(in) + L-methionine(out). The enzyme catalyses L-leucine(out) + L-methionine(in) = L-leucine(in) + L-methionine(out). The catalysed reaction is L-cysteine(out) + L-methionine(in) = L-cysteine(in) + L-methionine(out). It carries out the reaction S-methylmercury-L-cysteine(out) + L-methionine(in) = S-methylmercury-L-cysteine(in) + L-methionine(out). It catalyses the reaction S-methylmercury-L-cysteine(in) + L-leucine(out) = S-methylmercury-L-cysteine(out) + L-leucine(in). The enzyme catalyses S-methylmercury-L-cysteine(in) + L-phenylalanine(out) = S-methylmercury-L-cysteine(out) + L-phenylalanine(in). The catalysed reaction is L-phenylalanine(out) + L-serine(in) = L-phenylalanine(in) + L-serine(out). It carries out the reaction L-phenylalanine(out) + glycine(in) = L-phenylalanine(in) + glycine(out). It catalyses the reaction L-phenylalanine(out) + L-alanine(in) = L-phenylalanine(in) + L-alanine(out). The enzyme catalyses 3,3',5-triiodo-L-thyronine(out) = 3,3',5-triiodo-L-thyronine(in). With respect to regulation, leucine transport activity is inhibited by 2-amino-bicyclo-(2,2,1)-heptane-2-carboxylate (BCH), glycine, L-isomers of the neutral amino acids and histidine. Functionally, associates with SLC3A2 to form a functional heterodimeric complex that translocates small and large neutral amino acids with broad specificity and a stoichiometry of 1:1. Functions as amino acid antiporter mediating the influx of extracellular essential amino acids mainly in exchange with the efflux of highly concentrated intracellular amino acids. Has relatively symmetrical selectivities but strongly asymmetrical substrate affinities at both the intracellular and extracellular sides of the transporter. This asymmetry allows SLC7A8 to regulate intracellular amino acid pools (mM concentrations) by exchange with external amino acids (uM concentration range), equilibrating the relative concentrations of different amino acids across the plasma membrane instead of mediating their net uptake. May play an essential role in the reabsorption of neutral amino acids from the epithelial cells to the bloodstream in the kidney. Involved in the uptake of methylmercury (MeHg) when administered as the L-cysteine or D,L-homocysteine complexes, and hence plays a role in metal ion homeostasis and toxicity. Involved in the cellular activity of small molecular weight nitrosothiols, via the stereoselective transport of L-nitrosocysteine (L-CNSO) across the transmembrane. Imports the thyroid hormone diiodothyronine (T2) and to a smaller extent triiodothyronine (T3) but not rT 3 or thyroxine (T4). Mediates the uptake of L-DOPA. May participate in auditory function. The protein is Large neutral amino acids transporter small subunit 2 (Slc7a8) of Rattus norvegicus (Rat).